A 260-amino-acid chain; its full sequence is UPF0294 protein YE0917 (260 aa).

This sequence belongs to the UPF0294 family.

It is found in the cytoplasm. This Yersinia enterocolitica serotype O:8 / biotype 1B (strain NCTC 13174 / 8081) protein is UPF0294 protein YE0917.